Reading from the N-terminus, the 288-residue chain is Diaminopimelate epimerase (288 aa).

3 residues coordinate substrate: Asn-13, Gln-46, and Asn-66. Catalysis depends on Cys-75, which acts as the Proton donor. Substrate contacts are provided by residues 76-77 (GN), Asn-166, Asn-199, and 217-218 (ER). Residue Cys-226 is the Proton acceptor of the active site. Residue 227–228 (GT) coordinates substrate.

The protein belongs to the diaminopimelate epimerase family. Homodimer.

Its subcellular location is the cytoplasm. It catalyses the reaction (2S,6S)-2,6-diaminopimelate = meso-2,6-diaminopimelate. The protein operates within amino-acid biosynthesis; L-lysine biosynthesis via DAP pathway; DL-2,6-diaminopimelate from LL-2,6-diaminopimelate: step 1/1. Catalyzes the stereoinversion of LL-2,6-diaminopimelate (L,L-DAP) to meso-diaminopimelate (meso-DAP), a precursor of L-lysine and an essential component of the bacterial peptidoglycan. The sequence is that of Diaminopimelate epimerase from Cupriavidus necator (strain ATCC 17699 / DSM 428 / KCTC 22496 / NCIMB 10442 / H16 / Stanier 337) (Ralstonia eutropha).